Consider the following 510-residue polypeptide: 2,3-bisphosphoglycerate-independent phosphoglycerate mutase (510 aa).

Mn(2+) contacts are provided by D14 and S64. Residue S64 is the Phosphoserine intermediate of the active site. Substrate is bound by residues H125, 155 to 156, R187, R193, 259 to 262, and K332; these read RD and RADR. Residues D399, H403, D440, H441, and H459 each coordinate Mn(2+).

It belongs to the BPG-independent phosphoglycerate mutase family. As to quaternary structure, monomer. Mn(2+) serves as cofactor.

The enzyme catalyses (2R)-2-phosphoglycerate = (2R)-3-phosphoglycerate. Its pathway is carbohydrate degradation; glycolysis; pyruvate from D-glyceraldehyde 3-phosphate: step 3/5. Catalyzes the interconversion of 2-phosphoglycerate and 3-phosphoglycerate. This is 2,3-bisphosphoglycerate-independent phosphoglycerate mutase from Pseudomonas savastanoi pv. phaseolicola (strain 1448A / Race 6) (Pseudomonas syringae pv. phaseolicola (strain 1448A / Race 6)).